Consider the following 330-residue polypeptide: Olfactory receptor 5T9 (330 aa).

Topologically, residues 1-37 (MSIHSPGYTVRRIPVNNVTDTTMFILTGFTDDADLQV) are extracellular. The N-linked (GlcNAc...) asparagine glycan is linked to Asn17. The helical transmembrane segment at 38–58 (LLFLLFFVIYLFTLIGNLGLV) threads the bilayer. Residues 59-66 (LLVIGDSR) lie on the Cytoplasmic side of the membrane. Residues 67-87 (LHNPMYYFLSVLSFLDACYST) traverse the membrane as a helical segment. The Extracellular portion of the chain corresponds to 88–111 (VVTPKMLVNFISNDKSISYPGCVT). The cysteines at positions 109 and 201 are disulfide-linked. Residues 112–132 (EMFLFVTFGTTECFLLAAMAY) traverse the membrane as a helical segment. Residues 133-145 (DRFVAIYNPLLYA) lie on the Cytoplasmic side of the membrane. Residues 146–166 (VKMSPRVYIPLIIACYSGGIM) traverse the membrane as a helical segment. Over 167 to 208 (HATIHTVATFSLSFCASNEIRHVFCDIPPLLAISCSNTNINQ) the chain is Extracellular. Residues 209-229 (LLLFYCVGSIEIITILIVLVS) form a helical membrane-spanning segment. The Cytoplasmic segment spans residues 230–249 (YSFILFAILKMNSAEGRRKI). A helical transmembrane segment spans residues 250 to 270 (FSTCGSHLTGVSIYHGTILFM). Residues 271–283 (YVRPSSNYALEHD) lie on the Extracellular side of the membrane. A helical membrane pass occupies residues 284–304 (MIVSTFYTIVIPMLNPIIYSL). The Cytoplasmic segment spans residues 305-330 (RNKDVKEAMKKIFERNFFMNKVHFKL).

The protein belongs to the G-protein coupled receptor 1 family.

The protein localises to the cell membrane. Potential odorant receptor. In Mus musculus (Mouse), this protein is Olfactory receptor 5T9.